A 493-amino-acid polypeptide reads, in one-letter code: Ectonucleotide pyrophosphatase/phosphodiesterase 2 (493 aa).

Topologically, residues 1-28 are cytoplasmic; it reads MLLFEQPVDLEKNNEDDTNIKPFAISRH. Residues 29–45 form a helical; Signal-anchor for type II membrane protein membrane-spanning segment; the sequence is FLLKLLLCGIILIELLL. The Extracellular portion of the chain corresponds to 46 to 493; sequence YSKCPKPIDN…KTKKEKSLLQ (448 aa). 3 N-linked (GlcNAc...) asparagine glycosylation sites follow: asparagine 62, asparagine 69, and asparagine 112. Residues 76-438 are phosphodiesterase; sequence TLTILISIDG…IGIMGTHGYN (363 aa). Threonine 127 functions as the Nucleophile in the catalytic mechanism. N-linked (GlcNAc...) asparagine glycosylation is found at asparagine 153 and asparagine 441.

It belongs to the nucleotide pyrophosphatase/phosphodiesterase family. In terms of processing, autophosphorylated as part of the catalytic cycle of phosphodiesterase/pyrophosphatase activity.

It is found in the membrane. It carries out the reaction Hydrolytically removes 5'-nucleotides successively from the 3'-hydroxy termini of 3'-hydroxy-terminated oligonucleotides.. It catalyses the reaction a ribonucleoside 5'-triphosphate + H2O = a ribonucleoside 5'-phosphate + diphosphate + H(+). The enzyme catalyses a 2'-deoxyribonucleoside 5'-triphosphate + H2O = a 2'-deoxyribonucleoside 5'-phosphate + diphosphate + H(+). Its function is as follows. Mediates extracellular nucleotide derived phosphate hydrolysis along with NPP1 and PHO5. This is Ectonucleotide pyrophosphatase/phosphodiesterase 2 (NPP2) from Saccharomyces cerevisiae (strain ATCC 204508 / S288c) (Baker's yeast).